The following is a 300-amino-acid chain: tRNA dimethylallyltransferase 1 (300 aa).

13-20 (GPTGVGKT) lines the ATP pocket. 15 to 20 (TGVGKT) contributes to the substrate binding site. An interaction with substrate tRNA region spans residues 38-41 (DSRQ).

It belongs to the IPP transferase family. As to quaternary structure, monomer. Mg(2+) is required as a cofactor.

The enzyme catalyses adenosine(37) in tRNA + dimethylallyl diphosphate = N(6)-dimethylallyladenosine(37) in tRNA + diphosphate. In terms of biological role, catalyzes the transfer of a dimethylallyl group onto the adenine at position 37 in tRNAs that read codons beginning with uridine, leading to the formation of N6-(dimethylallyl)adenosine (i(6)A). This is tRNA dimethylallyltransferase 1 from Porphyromonas gingivalis (strain ATCC BAA-308 / W83).